Here is a 162-residue protein sequence, read N- to C-terminus: MNGQRYRETPLDIERLRRLNRATVERYMAMKGAERLQRHSLFVEDGCAGNWTTESGEPLVFRGHESLRRLAEWLERCFPDWEWHNVRIFETEDPNHFWVECDGRGKALVPGYPQGYCENHYIHSFELENGRIKRNREFMNPIQKLRALGIAVPQIKRDGIPT.

The protein belongs to the PhzA/PhzB family.

Its pathway is antibiotic biosynthesis; phenazine biosynthesis. Its function is as follows. Involved in the biosynthesis of the antibiotic phenazine, a nitrogen-containing heterocyclic molecule. PhzA1 (operon phzA1B1C1E1F1G1) has a role in the biosynthesis of the phenazine during planktonic growth. This chain is Phenazine biosynthesis protein PhzA1, found in Pseudomonas aeruginosa (strain ATCC 15692 / DSM 22644 / CIP 104116 / JCM 14847 / LMG 12228 / 1C / PRS 101 / PAO1).